Reading from the N-terminus, the 256-residue chain is Low molecular mass lipoprotein PBMHP-6 (256 aa).

The signal sequence occupies residues 1–19 (MRLTLFAFVLAVCALASNA).

Belongs to the 30 kDa lipoprotein family.

Its subcellular location is the secreted. The protein is Low molecular mass lipoprotein PBMHP-6 of Bombyx mori (Silk moth).